Here is a 145-residue protein sequence, read N- to C-terminus: UPF0102 protein BAV3162 (145 aa).

Belongs to the UPF0102 family.

This is UPF0102 protein BAV3162 from Bordetella avium (strain 197N).